Reading from the N-terminus, the 110-residue chain is Cyclin-dependent protein kinase inhibitor SMR8 (110 aa).

Interacts with CDKA-1 and D-type cyclins. As to expression, expressed in the root vascular tissue.

Probable cyclin-dependent protein kinase (CDK) inhibitor that functions as a repressor of mitosis in the endoreduplication cell cycle. In Arabidopsis thaliana (Mouse-ear cress), this protein is Cyclin-dependent protein kinase inhibitor SMR8.